The following is a 79-amino-acid chain: Small ribosomal subunit protein bS18 (79 aa).

It belongs to the bacterial ribosomal protein bS18 family. Part of the 30S ribosomal subunit. Forms a tight heterodimer with protein bS6.

In terms of biological role, binds as a heterodimer with protein bS6 to the central domain of the 16S rRNA, where it helps stabilize the platform of the 30S subunit. The chain is Small ribosomal subunit protein bS18 from Onion yellows phytoplasma (strain OY-M).